The chain runs to 88 residues: Small ribosomal subunit protein bS16c (88 aa).

This sequence belongs to the bacterial ribosomal protein bS16 family.

The protein localises to the plastid. It is found in the chloroplast. The sequence is that of Small ribosomal subunit protein bS16c from Gossypium barbadense (Sea Island cotton).